Consider the following 119-residue polypeptide: Putative membrane protein insertion efficiency factor (119 aa).

The protein belongs to the UPF0161 family.

The protein localises to the cell inner membrane. Could be involved in insertion of integral membrane proteins into the membrane. The chain is Putative membrane protein insertion efficiency factor from Brucella anthropi (strain ATCC 49188 / DSM 6882 / CCUG 24695 / JCM 21032 / LMG 3331 / NBRC 15819 / NCTC 12168 / Alc 37) (Ochrobactrum anthropi).